The following is a 342-amino-acid chain: Flotillin-like protein FloA (342 aa).

2 helical membrane passes run 18–38 (FFIFVLAIVLLIILSVIGKFI) and 39–59 (SLWFQAFVSGTPIPLFNIIGM).

This sequence belongs to the flotillin-like FloA family. In terms of assembly, homooligomerizes.

The protein resides in the cell membrane. It is found in the membrane raft. Found in functional membrane microdomains (FMM) that may be equivalent to eukaryotic membrane rafts. FMMs are highly dynamic and increase in number as cells age. Flotillins are thought to be important factors in membrane fluidity. The chain is Flotillin-like protein FloA from Protochlamydia amoebophila (strain UWE25).